The primary structure comprises 84 residues: Small ribosomal subunit protein eS27 (84 aa).

Residues 1–16 (MPLAKDLLHPTPEEEK) are compositionally biased toward basic and acidic residues. Residues 1–23 (MPLAKDLLHPTPEEEKRKHKKKR) form a disordered region. The C4-type zinc-finger motif lies at 37 to 59 (CPGCYKITTVFSHAQTVVLCVGC).

The protein belongs to the eukaryotic ribosomal protein eS27 family. Component of the small ribosomal subunit. Part of the small subunit (SSU) processome, composed of more than 70 proteins and the RNA chaperone small nucleolar RNA (snoRNA) U3. Zn(2+) serves as cofactor.

It is found in the cytoplasm. Its subcellular location is the nucleus. The protein resides in the nucleolus. Its function is as follows. Component of the small ribosomal subunit. The ribosome is a large ribonucleoprotein complex responsible for the synthesis of proteins in the cell. Required for proper rRNA processing and maturation of 18S rRNAs. Part of the small subunit (SSU) processome, first precursor of the small eukaryotic ribosomal subunit. During the assembly of the SSU processome in the nucleolus, many ribosome biogenesis factors, an RNA chaperone and ribosomal proteins associate with the nascent pre-rRNA and work in concert to generate RNA folding, modifications, rearrangements and cleavage as well as targeted degradation of pre-ribosomal RNA by the RNA exosome. This chain is Small ribosomal subunit protein eS27 (rps27), found in Xenopus laevis (African clawed frog).